Consider the following 185-residue polypeptide: MMTHLRPALASLLALSLLTGVAYPLALTGIAAVIAPDRAAGSLILREGQVVGSALIGQGFEGPGYLHPRPSASDWNAAGTSASNLGPTSAALLAQVQERQAAYEAQNGASAPVDAVTASGSGLDPHVSPANARAQAGRIARARGLEEAAVRRLIEAHVEPPLLGLWGQARVNVLAVNLALDAAGA.

The helical transmembrane segment at 14–34 (ALSLLTGVAYPLALTGIAAVI) threads the bilayer.

This sequence belongs to the KdpC family. As to quaternary structure, the system is composed of three essential subunits: KdpA, KdpB and KdpC.

It is found in the cell inner membrane. Part of the high-affinity ATP-driven potassium transport (or Kdp) system, which catalyzes the hydrolysis of ATP coupled with the electrogenic transport of potassium into the cytoplasm. This subunit acts as a catalytic chaperone that increases the ATP-binding affinity of the ATP-hydrolyzing subunit KdpB by the formation of a transient KdpB/KdpC/ATP ternary complex. The sequence is that of Potassium-transporting ATPase KdpC subunit from Cereibacter sphaeroides (strain KD131 / KCTC 12085) (Rhodobacter sphaeroides).